A 590-amino-acid chain; its full sequence is Acetolactate synthase large subunit (590 aa).

Glutamate 61 is a thiamine diphosphate binding site. FAD contacts are provided by residues arginine 163, 271–292 (HGTA…LGAR), and 314–333 (DIDP…IVGD). Positions 405–484 (QHQMWSAQFL…IKIVIINNRW (80 aa)) are thiamine pyrophosphate binding. Mg(2+) contacts are provided by aspartate 455 and asparagine 482.

This sequence belongs to the TPP enzyme family. Dimer of large and small chains. Mg(2+) serves as cofactor. Thiamine diphosphate is required as a cofactor.

Its subcellular location is the plastid. It localises to the chloroplast. It catalyses the reaction 2 pyruvate + H(+) = (2S)-2-acetolactate + CO2. It participates in amino-acid biosynthesis; L-isoleucine biosynthesis; L-isoleucine from 2-oxobutanoate: step 1/4. It functions in the pathway amino-acid biosynthesis; L-valine biosynthesis; L-valine from pyruvate: step 1/4. In Porphyra purpurea (Red seaweed), this protein is Acetolactate synthase large subunit (ilvB).